The chain runs to 293 residues: 33 kDa chaperonin (293 aa).

Intrachain disulfides connect cysteine 239-cysteine 241 and cysteine 272-cysteine 275.

The protein belongs to the HSP33 family. Post-translationally, under oxidizing conditions two disulfide bonds are formed involving the reactive cysteines. Under reducing conditions zinc is bound to the reactive cysteines and the protein is inactive.

Its subcellular location is the cytoplasm. Redox regulated molecular chaperone. Protects both thermally unfolding and oxidatively damaged proteins from irreversible aggregation. Plays an important role in the bacterial defense system toward oxidative stress. This is 33 kDa chaperonin from Limosilactobacillus fermentum (strain NBRC 3956 / LMG 18251) (Lactobacillus fermentum).